A 154-amino-acid chain; its full sequence is UPF0178 protein in pahZ1 5'region (154 aa).

It belongs to the UPF0178 family.

The protein is UPF0178 protein in pahZ1 5'region of Paucimonas lemoignei (Pseudomonas lemoignei).